A 273-amino-acid chain; its full sequence is Cilia- and flagella-associated protein 298-B (273 aa).

Belongs to the CFAP298 family.

It localises to the cytoplasm. It is found in the cytoskeleton. The protein localises to the cilium basal body. In terms of biological role, plays a role in motile cilium function, possibly by acting on outer dynein arm assembly. Seems to be important for initiation rather than maintenance of cilium motility. Required for correct positioning of the cilium at the apical cell surface, suggesting an additional role in the planar cell polarity (PCP) pathway. May suppress canonical Wnt signaling activity. The chain is Cilia- and flagella-associated protein 298-B (cfap298-b) from Xenopus laevis (African clawed frog).